A 268-amino-acid polypeptide reads, in one-letter code: Tryptophan synthase alpha chain (268 aa).

Catalysis depends on proton acceptor residues Glu-49 and Asp-60.

This sequence belongs to the TrpA family. As to quaternary structure, tetramer of two alpha and two beta chains.

The enzyme catalyses (1S,2R)-1-C-(indol-3-yl)glycerol 3-phosphate + L-serine = D-glyceraldehyde 3-phosphate + L-tryptophan + H2O. It functions in the pathway amino-acid biosynthesis; L-tryptophan biosynthesis; L-tryptophan from chorismate: step 5/5. The alpha subunit is responsible for the aldol cleavage of indoleglycerol phosphate to indole and glyceraldehyde 3-phosphate. The chain is Tryptophan synthase alpha chain from Vibrio vulnificus (strain YJ016).